The chain runs to 445 residues: Histidinol dehydrogenase (445 aa).

Residues Tyr-130, Gln-192, and Asn-215 each contribute to the NAD(+) site. 3 residues coordinate substrate: Ser-238, Gln-260, and His-263. Zn(2+) contacts are provided by Gln-260 and His-263. Residues Glu-328 and His-329 each act as proton acceptor in the active site. His-329, Asp-362, Glu-416, and His-421 together coordinate substrate. Asp-362 provides a ligand contact to Zn(2+). His-421 is a binding site for Zn(2+).

This sequence belongs to the histidinol dehydrogenase family. The cofactor is Zn(2+).

It catalyses the reaction L-histidinol + 2 NAD(+) + H2O = L-histidine + 2 NADH + 3 H(+). The protein operates within amino-acid biosynthesis; L-histidine biosynthesis; L-histidine from 5-phospho-alpha-D-ribose 1-diphosphate: step 9/9. Catalyzes the sequential NAD-dependent oxidations of L-histidinol to L-histidinaldehyde and then to L-histidine. The sequence is that of Histidinol dehydrogenase from Gloeobacter violaceus (strain ATCC 29082 / PCC 7421).